Consider the following 337-residue polypeptide: Glyceraldehyde-3-phosphate dehydrogenase (337 aa).

NAD(+)-binding positions include 11–12, aspartate 33, and lysine 78; that span reads RI. D-glyceraldehyde 3-phosphate contacts are provided by residues 149–151, threonine 180, 209–210, and arginine 232; these read SCT and TG. Cysteine 150 (nucleophile) is an active-site residue. Asparagine 314 serves as a coordination point for NAD(+).

This sequence belongs to the glyceraldehyde-3-phosphate dehydrogenase family. In terms of assembly, homotetramer.

It is found in the cytoplasm. The enzyme catalyses D-glyceraldehyde 3-phosphate + phosphate + NAD(+) = (2R)-3-phospho-glyceroyl phosphate + NADH + H(+). Its pathway is carbohydrate degradation; glycolysis; pyruvate from D-glyceraldehyde 3-phosphate: step 1/5. The chain is Glyceraldehyde-3-phosphate dehydrogenase (GPD) from Lyophyllum shimeji (Hon-shimeji).